Consider the following 287-residue polypeptide: Pyridoxal 5'-phosphate synthase subunit PdxS (287 aa).

Aspartate 21 is a binding site for D-ribose 5-phosphate. Lysine 78 serves as the catalytic Schiff-base intermediate with D-ribose 5-phosphate. Glycine 150 provides a ligand contact to D-ribose 5-phosphate. Arginine 162 is a binding site for D-glyceraldehyde 3-phosphate. Residues glycine 211 and glycine 232 to serine 233 each bind D-ribose 5-phosphate.

It belongs to the PdxS/SNZ family. In the presence of PdxT, forms a dodecamer of heterodimers.

It carries out the reaction aldehydo-D-ribose 5-phosphate + D-glyceraldehyde 3-phosphate + L-glutamine = pyridoxal 5'-phosphate + L-glutamate + phosphate + 3 H2O + H(+). Its pathway is cofactor biosynthesis; pyridoxal 5'-phosphate biosynthesis. Its function is as follows. Catalyzes the formation of pyridoxal 5'-phosphate from ribose 5-phosphate (RBP), glyceraldehyde 3-phosphate (G3P) and ammonia. The ammonia is provided by the PdxT subunit. Can also use ribulose 5-phosphate and dihydroxyacetone phosphate as substrates, resulting from enzyme-catalyzed isomerization of RBP and G3P, respectively. This is Pyridoxal 5'-phosphate synthase subunit PdxS from Francisella philomiragia subsp. philomiragia (strain ATCC 25017 / CCUG 19701 / FSC 153 / O#319-036).